Here is a 374-residue protein sequence, read N- to C-terminus: MKFELDTTDGRARRGRLIFDRGTVETPAFMPVGTYGTVKGMTPEEVRATGADILLGNTFHLWLRPGEEIMRKHGDLHDFMNWQRPILTDSGGFQVFSLGDIRKITEEGVHFRSPINGEKIFLDPEKSMQIQDSLGSDVVMIFDECTPYPATHDEARKSMQMSLRWAKRSRDEFDRLENPNSLFGIIQGGVFEDLRDESVKGLLDIGFDGYAVGGLAVGEPKADMHRILEHVCPQIPADKPRYLMGVGKPEDLVEGVRRGVDMFDCVMPTRNARNGHLFTSEGVIKIRNARHRDDTATLDPKCDCYTCKNYSRAYLYHLDRCNEILGARLNTIHNLRYYQMLMEGLRGAIETGTLDAFVKEFYTSFGREVPELIV.

The active-site Proton acceptor is Asp-89. Residues 89-93, Asp-143, Gln-187, and Gly-214 each bind substrate; that span reads DSGGF. The segment at 245–251 is RNA binding; sequence GVGKPED. Asp-264 acts as the Nucleophile in catalysis. Positions 269 to 273 are RNA binding; important for wobble base 34 recognition; it reads TRNAR. Residues Cys-302, Cys-304, Cys-307, and His-333 each coordinate Zn(2+).

Belongs to the queuine tRNA-ribosyltransferase family. In terms of assembly, homodimer. Within each dimer, one monomer is responsible for RNA recognition and catalysis, while the other monomer binds to the replacement base PreQ1. Zn(2+) serves as cofactor.

It carries out the reaction 7-aminomethyl-7-carbaguanine + guanosine(34) in tRNA = 7-aminomethyl-7-carbaguanosine(34) in tRNA + guanine. It participates in tRNA modification; tRNA-queuosine biosynthesis. In terms of biological role, catalyzes the base-exchange of a guanine (G) residue with the queuine precursor 7-aminomethyl-7-deazaguanine (PreQ1) at position 34 (anticodon wobble position) in tRNAs with GU(N) anticodons (tRNA-Asp, -Asn, -His and -Tyr). Catalysis occurs through a double-displacement mechanism. The nucleophile active site attacks the C1' of nucleotide 34 to detach the guanine base from the RNA, forming a covalent enzyme-RNA intermediate. The proton acceptor active site deprotonates the incoming PreQ1, allowing a nucleophilic attack on the C1' of the ribose to form the product. After dissociation, two additional enzymatic reactions on the tRNA convert PreQ1 to queuine (Q), resulting in the hypermodified nucleoside queuosine (7-(((4,5-cis-dihydroxy-2-cyclopenten-1-yl)amino)methyl)-7-deazaguanosine). The polypeptide is Queuine tRNA-ribosyltransferase (Shewanella frigidimarina (strain NCIMB 400)).